Reading from the N-terminus, the 112-residue chain is Phosphoribosyl-AMP cyclohydrolase (112 aa).

D76 is a binding site for Mg(2+). Residue C77 participates in Zn(2+) binding. Mg(2+)-binding residues include D78 and D80. Zn(2+) is bound by residues C93 and C100.

Belongs to the PRA-CH family. In terms of assembly, homodimer. It depends on Mg(2+) as a cofactor. Zn(2+) is required as a cofactor.

It localises to the cytoplasm. The enzyme catalyses 1-(5-phospho-beta-D-ribosyl)-5'-AMP + H2O = 1-(5-phospho-beta-D-ribosyl)-5-[(5-phospho-beta-D-ribosylamino)methylideneamino]imidazole-4-carboxamide. It participates in amino-acid biosynthesis; L-histidine biosynthesis; L-histidine from 5-phospho-alpha-D-ribose 1-diphosphate: step 3/9. In terms of biological role, catalyzes the hydrolysis of the adenine ring of phosphoribosyl-AMP. The chain is Phosphoribosyl-AMP cyclohydrolase from Streptococcus thermophilus (strain ATCC BAA-491 / LMD-9).